The primary structure comprises 82 residues: Small ribosomal subunit protein uS17 (82 aa).

Belongs to the universal ribosomal protein uS17 family. In terms of assembly, part of the 30S ribosomal subunit.

Functionally, one of the primary rRNA binding proteins, it binds specifically to the 5'-end of 16S ribosomal RNA. This is Small ribosomal subunit protein uS17 from Ehrlichia ruminantium (strain Gardel).